We begin with the raw amino-acid sequence, 276 residues long: Large ribosomal subunit protein uL2 (276 aa).

Disordered regions lie at residues 1–20 (MGIK…TTND) and 219–276 (TVRG…RRKK). Residues 7-20 (NPTTNGRRNMTTND) are compositionally biased toward polar residues.

This sequence belongs to the universal ribosomal protein uL2 family. In terms of assembly, part of the 50S ribosomal subunit. Forms a bridge to the 30S subunit in the 70S ribosome.

Functionally, one of the primary rRNA binding proteins. Required for association of the 30S and 50S subunits to form the 70S ribosome, for tRNA binding and peptide bond formation. It has been suggested to have peptidyltransferase activity; this is somewhat controversial. Makes several contacts with the 16S rRNA in the 70S ribosome. The chain is Large ribosomal subunit protein uL2 from Bacillus mycoides (strain KBAB4) (Bacillus weihenstephanensis).